We begin with the raw amino-acid sequence, 418 residues long: Putative F-box protein At1g20795 (418 aa).

An F-box domain is found at 1–46 (METLGLPLPLFEKILFRLDPISLVMMKCTRRSFNSHISEDPYFKSK).

The polypeptide is Putative F-box protein At1g20795 (Arabidopsis thaliana (Mouse-ear cress)).